The following is a 625-amino-acid chain: Sorting nexin-41 (625 aa).

The disordered stretch occupies residues 1–90 (MDYNIFEAVH…STSSHAVVEA (90 aa)). Residues 54–86 (SPPSSSSLPSSPAHSSSAGSSRASTSSSTSSHA) are compositionally biased toward low complexity. Residues 98 to 235 (VSLSMSTTAT…QKFLNPEFNW (138 aa)) form the PX domain. 4 residues coordinate a 1,2-diacyl-sn-glycero-3-phospho-(1D-myo-inositol-3-phosphate): arginine 153, serine 155, lysine 179, and arginine 202. Coiled coils occupy residues 437 to 469 (QFKI…NESL) and 539 to 563 (QLTE…KDCL).

This sequence belongs to the sorting nexin family. Binds to SNX4.

It is found in the prevacuolar compartment. It localises to the endosome. Its subcellular location is the endosome membrane. In terms of biological role, involved in proper sorting of the v-SNARE protein SNC1. The polypeptide is Sorting nexin-41 (SNX41) (Saccharomyces cerevisiae (strain ATCC 204508 / S288c) (Baker's yeast)).